The sequence spans 51 residues: rpoE leader peptide (51 aa).

In terms of biological role, a short protein whose stop codon overlaps with the start codon of downstream rpoE; a premature stop codon at position 12 results in decreased expression of ECF sigma factor RpoE, thus they are translationally coupled. This is rpoE leader peptide from Escherichia coli (strain K12).